The sequence spans 609 residues: UvrABC system protein C (609 aa).

The 79-residue stretch at 19–97 (ASPGCYLWKS…IKKHNPRFNV (79 aa)) folds into the GIY-YIG domain. In terms of domain architecture, UVR spans 208-243 (ESLVSDLNIKMSNASERLDFEKAARYRDMLQRIQNF).

This sequence belongs to the UvrC family. Interacts with UvrB in an incision complex.

The protein localises to the cytoplasm. In terms of biological role, the UvrABC repair system catalyzes the recognition and processing of DNA lesions. UvrC both incises the 5' and 3' sides of the lesion. The N-terminal half is responsible for the 3' incision and the C-terminal half is responsible for the 5' incision. In Leptospira interrogans serogroup Icterohaemorrhagiae serovar Lai (strain 56601), this protein is UvrABC system protein C.